A 236-amino-acid chain; its full sequence is Heme oxygenase (236 aa).

Position 17 (His17) interacts with heme b.

Belongs to the heme oxygenase family.

The protein localises to the plastid. It is found in the chloroplast. It catalyses the reaction heme b + 3 reduced [NADPH--hemoprotein reductase] + 3 O2 = biliverdin IXalpha + CO + Fe(2+) + 3 oxidized [NADPH--hemoprotein reductase] + 3 H2O + H(+). Functionally, catalyzes the opening of the heme ring with the release of iron. Key enzyme in the synthesis of the chromophoric part of the photosynthetic antennae. In Porphyra purpurea (Red seaweed), this protein is Heme oxygenase (pbsA).